A 598-amino-acid chain; its full sequence is MFS siderochrome iron transporter D (598 aa).

Residues 1–34 (MLSSWQKKFFQTPEHPPAEGIAPPRDDGVPNPEP) form a disordered region. Topologically, residues 1 to 76 (MLSSWQKKFF…AEAITLTWSK (76 aa)) are cytoplasmic. Residues 77–97 (ISLGAAYFLMWLLYLVNGFQA) traverse the membrane as a helical segment. Residues 98-115 (SITGNLSAYVTSGFESHS) lie on the Extracellular side of the membrane. N-linked (GlcNAc...) asparagine glycosylation occurs at Asn-102. The helical transmembrane segment at 116 to 136 (LIPVISIVSSVMSAATYMPLA) threads the bilayer. Topologically, residues 137-144 (KVLNLWDR) are cytoplasmic. The chain crosses the membrane as a helical span at residues 145-165 (SIGFIIMVAFATLGLILSATC). Residues 166-171 (HDIGTY) are Extracellular-facing. A helical membrane pass occupies residues 172–192 (CAAQVFYSIGFAGIIFSVDVI). Topologically, residues 193–203 (TADTSTLRDRG) are cytoplasmic. Residues 204–224 (LAYAFTSSPYIITAFGGPAAA) traverse the membrane as a helical segment. Topologically, residues 225-233 (EHFYDSNWR) are extracellular. Residues 234–254 (WAYGCFSIVLPVVALPMFCLL) form a helical membrane-spanning segment. Residues 255 to 289 (RWNRHKAKKSGLLKDKADSGRTWMESIRHYIIEFD) lie on the Cytoplasmic side of the membrane. A helical transmembrane segment spans residues 290-310 (ILGVFFLAAGLVLFLLPFSIA). At 311–318 (GSTEDDWK) the chain is on the extracellular side. Residues 319-339 (SASIITMLVIGFVCLLVFALV) form a helical membrane-spanning segment. Residues 340–341 (ER) are Cytoplasmic-facing. A helical membrane pass occupies residues 342–362 (FVAPVPFLPWALLASRTVLGA). The Extracellular portion of the chain corresponds to 363–396 (CMLDVCYQIAYYCWFNYYTSYLQVVYGTSITTAG). Residues 397 to 417 (YITSIFDVVSGVWLFIVGFLI) form a helical membrane-spanning segment. Over 418–424 (KKTNRFR) the chain is Cytoplasmic. Residues 425–445 (WLLFIAVPLYILGVGLMIYFR) form a helical membrane-spanning segment. Topologically, residues 446-450 (KPSWS) are extracellular. Residues 451 to 471 (VGYMIMCQIFIAFAGGTMIIC) form a helical membrane-spanning segment. The Cytoplasmic segment spans residues 472–490 (QQVAVLAASDHDHAASSLA). A helical transmembrane segment spans residues 491-511 (FLNVFGTMGSAVGSSISGAIW). Residues 512 to 562 (THTLPGALQRLLPDSVKADWQTIYDSLEEQLSYERGTLIRQAIALAYASTQ) lie on the Extracellular side of the membrane. A helical membrane pass occupies residues 563–583 (SKMLIAGTAIMALSLVWMFVI). At 584-598 (RDIKLTKTQTKGVLF) the chain is on the cytoplasmic side.

It belongs to the major facilitator superfamily.

It is found in the cell membrane. Its function is as follows. Major facilitator transporter involved in fusarinine C (FsC) uptake. In contrast to TAFC-mediated iron uptake, FsC-mediated iron uptake via mirD does not play a significant role during infection. The chain is MFS siderochrome iron transporter D from Aspergillus fumigatus (strain ATCC MYA-4609 / CBS 101355 / FGSC A1100 / Af293) (Neosartorya fumigata).